The following is a 389-amino-acid chain: Succinate--CoA ligase [ADP-forming] subunit beta (389 aa).

The ATP-grasp domain occupies 9–244; sequence KELLRQFNVP…IDEEDAAEIE (236 aa). Residues Lys46, 53–55, Glu99, Ala102, and Glu107 contribute to the ATP site; that span reads GRG. Residues Asn199 and Asp213 each contribute to the Mg(2+) site. Substrate is bound by residues Asn264 and 321–323; that span reads GIM.

Belongs to the succinate/malate CoA ligase beta subunit family. In terms of assembly, heterotetramer of two alpha and two beta subunits. It depends on Mg(2+) as a cofactor.

The catalysed reaction is succinate + ATP + CoA = succinyl-CoA + ADP + phosphate. It carries out the reaction GTP + succinate + CoA = succinyl-CoA + GDP + phosphate. Its pathway is carbohydrate metabolism; tricarboxylic acid cycle; succinate from succinyl-CoA (ligase route): step 1/1. Functionally, succinyl-CoA synthetase functions in the citric acid cycle (TCA), coupling the hydrolysis of succinyl-CoA to the synthesis of either ATP or GTP and thus represents the only step of substrate-level phosphorylation in the TCA. The beta subunit provides nucleotide specificity of the enzyme and binds the substrate succinate, while the binding sites for coenzyme A and phosphate are found in the alpha subunit. This is Succinate--CoA ligase [ADP-forming] subunit beta from Polynucleobacter necessarius subsp. necessarius (strain STIR1).